The primary structure comprises 506 residues: Acetaldehyde dehydrogenase (506 aa).

Active-site residues include E262 and C301.

This sequence belongs to the aldehyde dehydrogenase family.

The catalysed reaction is acetaldehyde + NAD(+) + H2O = acetate + NADH + 2 H(+). Its pathway is alcohol metabolism; ethanol degradation; acetate from ethanol: step 2/2. Catalyzes the NAD(+)-dependent oxidation of acetaldehyde to acetate. Is likely a component of the ethanol oxidation system that allows P.aeruginosa to grow on ethanol as the sole carbon and energy source. This chain is Acetaldehyde dehydrogenase, found in Pseudomonas aeruginosa.